The primary structure comprises 196 residues: MLICVVGMPGAGKGEFVKVAREEGIPVVVMGDAVRREAERRGMDVGEMAKRLREERGMDAVARLVEEDVERELRRAGVVVIDGIRNPEELEYFRDRFGERSVIVVAIHASPQTRFERLRIRGREDDPDTKREFEERDERELGFGIGDVISRADVMIVNERVSLPEFREKCRMVIRAILRGDPDDLPGGFDHLRVPD.

7–14 (GMPGAGKG) lines the ATP pocket.

This sequence belongs to the UPF0200 family.

The polypeptide is UPF0200 protein MK0400 (Methanopyrus kandleri (strain AV19 / DSM 6324 / JCM 9639 / NBRC 100938)).